The sequence spans 387 residues: Phosphoglycerate kinase (387 aa).

Residues 21–23 (DLN), Arg36, 59–62 (HLGR), Arg113, and Arg146 contribute to the substrate site. ATP contacts are provided by residues Lys197, Glu314, and 340–343 (GGDT).

Belongs to the phosphoglycerate kinase family. As to quaternary structure, monomer.

Its subcellular location is the cytoplasm. It catalyses the reaction (2R)-3-phosphoglycerate + ATP = (2R)-3-phospho-glyceroyl phosphate + ADP. It participates in carbohydrate degradation; glycolysis; pyruvate from D-glyceraldehyde 3-phosphate: step 2/5. In Yersinia enterocolitica serotype O:8 / biotype 1B (strain NCTC 13174 / 8081), this protein is Phosphoglycerate kinase.